The sequence spans 129 residues: Follitropin subunit beta (129 aa).

The signal sequence occupies residues 1–20 (MKSVQFCFLFCCWRAICCRS). 6 cysteine pairs are disulfide-bonded: Cys-21–Cys-69, Cys-35–Cys-84, Cys-38–Cys-122, Cys-46–Cys-100, Cys-50–Cys-102, and Cys-105–Cys-112. Residues Asn-25 and Asn-42 are each glycosylated (N-linked (GlcNAc...) asparagine).

Belongs to the glycoprotein hormones subunit beta family. As to quaternary structure, heterodimer. The active follitropin is a heterodimer composed of an alpha chain/CGA shared with other hormones and a unique beta chain/FSHB shown here.

The protein resides in the secreted. Together with the alpha chain CGA constitutes follitropin, the follicle-stimulating hormone, and provides its biological specificity to the hormone heterodimer. Binds FSHR, a G protein-coupled receptor, on target cells to activate downstream signaling pathways. Follitropin is involved in follicle development and spermatogenesis in reproductive organs. This chain is Follitropin subunit beta (FSHB), found in Bos taurus (Bovine).